Here is a 552-residue protein sequence, read N- to C-terminus: Protein FAM234A (552 aa).

Residues 1 to 48 are Cytoplasmic-facing; it reads MTDGKDLEAEIHPLKSENRKVPENAGALAGKEPRGTPAPQTRLSHCRT. A helical; Signal-anchor for type II membrane protein membrane pass occupies residues 49 to 69; sequence AAFFLSLFACLLVVFVVSFII. Topologically, residues 70–552 are extracellular; the sequence is PCPDRPALQG…LSRLRYRSEA (483 aa). 3 N-linked (GlcNAc...) asparagine glycosylation sites follow: N115, N238, and N473.

This sequence belongs to the FAM234 family.

It is found in the membrane. This is Protein FAM234A (FAM234A) from Bos taurus (Bovine).